A 90-amino-acid chain; its full sequence is Progonadoliberin-3 (90 aa).

The first 23 residues, 1–23, serve as a signal peptide directing secretion; that stretch reads MEAGSRVIMQVLLLALVVQVTLS. At glutamine 24 the chain carries Pyrrolidone carboxylic acid. Glycine 33 is modified (glycine amide).

It belongs to the GnRH family. As to expression, expressed only in the terminal nerve nucleus of the telencephalon.

It localises to the secreted. Its function is as follows. Stimulates the secretion of gonadotropins. The protein is Progonadoliberin-3 (gnrh3) of Haplochromis burtoni (Burton's mouthbrooder).